The primary structure comprises 218 residues: Translation initiation factor 6 (218 aa).

The protein belongs to the eIF-6 family.

Its function is as follows. Binds to the 50S ribosomal subunit and prevents its association with the 30S ribosomal subunit to form the 70S initiation complex. The polypeptide is Translation initiation factor 6 (Methanosarcina acetivorans (strain ATCC 35395 / DSM 2834 / JCM 12185 / C2A)).